The sequence spans 297 residues: tRNA pseudouridine synthase B (297 aa).

Catalysis depends on Asp-39, which acts as the Nucleophile.

The protein belongs to the pseudouridine synthase TruB family. Type 1 subfamily.

It catalyses the reaction uridine(55) in tRNA = pseudouridine(55) in tRNA. Functionally, responsible for synthesis of pseudouridine from uracil-55 in the psi GC loop of transfer RNAs. The sequence is that of tRNA pseudouridine synthase B from Lactobacillus gasseri (strain ATCC 33323 / DSM 20243 / BCRC 14619 / CIP 102991 / JCM 1131 / KCTC 3163 / NCIMB 11718 / NCTC 13722 / AM63).